A 428-amino-acid polypeptide reads, in one-letter code: MPAPGIFHVCWDGKVPLTYRPHNNGEHHDPTKNQTGSRLVYWRCDSRKRCWRGDYHDQGANHWIDDHIATPMSKYRDYEQSRQSFGINVLGTLIVEVEAENGQTGFAVSTAGEMGCFIVEKHLNRFIEGKCVSDIKLIHDQMLNATLYYSGSGGLVMNTISCVDLALWDLFGKVVGLPVYKLLGGAVRDEIQFYATGARPDLAKEMGFIGGKMPTHWGPHDGDAGIRKDAVMVADMREKCGEDFWLMLDCWMSQDVNYATKLAHACAPYNLKWIEECLPPQQYEGYRELKRNAPVGMMVTSGEHHGTLQSFRTLSETGIDIMQPDVGWCGGLTTLVEIAAIAKSRGQLVVPHGSSVYSHHAVITFTNTPFSEFLMTSPDCSTMRPQFDPILLNEPVPVNGRIHKSVLDKPGFGVELNRDCNLKRPYSH.

Substrate-binding residues include His56 and Arg82. Asp249, Glu275, and Glu303 together coordinate Mg(2+). His352 serves as the catalytic Proton acceptor. Glu372 contacts substrate.

Belongs to the mandelate racemase/muconate lactonizing enzyme family. RhamD subfamily. As to quaternary structure, homooctamer; tetramer of dimers. Requires Mg(2+) as cofactor.

The enzyme catalyses L-rhamnonate = 2-dehydro-3-deoxy-L-rhamnonate + H2O. Functionally, catalyzes the dehydration of L-rhamnonate to 2-keto-3-deoxy-L-rhamnonate (KDR). This is L-rhamnonate dehydratase from Shigella sonnei (strain Ss046).